The primary structure comprises 30 residues: Rothein 3.4 (30 aa).

Position 30 is a leucine amide (Leu30).

It belongs to the frog skin active peptide (FSAP) family. Rothein subfamily. In terms of tissue distribution, expressed by the skin dorsal glands.

The protein resides in the secreted. Lacks antimicrobial activity. Does not inhibit the formation of NO by neuronal nitric oxide. The protein is Rothein 3.4 of Litoria rothii (Roth's tree frog).